The following is a 264-amino-acid chain: MLRLSNAAVITTNAILALIGLAALSFSVYVYVQGPSQCQRFVQNPLIVTAALLFFISSLGLIAALYGSHIIITLYLFFLFLSILLLLVLSVFIFLVTNPTAGKALSGRGIGNVKTGDYQNWIGNHFLRGKNWEGITKCLSDSRVCKRFGPRDIDFDSKHLSNVQFGCCRPPVECGFESKNATWWTVPATATTAIIGDCKAWSNTQRQLCYACESCKIGVLKGIRKRWRILIVVNLLLILLVVFLYSCGCCVRKNNRVPWKRRFF.

The Cytoplasmic portion of the chain corresponds to 1 to 13; it reads MLRLSNAAVITTN. The helical transmembrane segment at 14-34 threads the bilayer; the sequence is AILALIGLAALSFSVYVYVQG. Residues 35-45 lie on the Extracellular side of the membrane; that stretch reads PSQCQRFVQNP. Residues 46–66 traverse the membrane as a helical segment; it reads LIVTAALLFFISSLGLIAALY. Topologically, residues 67 to 75 are cytoplasmic; the sequence is GSHIIITLY. A helical transmembrane segment spans residues 76-96; it reads LFFLFLSILLLLVLSVFIFLV. Residues 97-228 lie on the Extracellular side of the membrane; that stretch reads TNPTAGKALS…VLKGIRKRWR (132 aa). Asn180 carries an N-linked (GlcNAc...) asparagine glycan. A helical transmembrane segment spans residues 229 to 249; the sequence is ILIVVNLLLILLVVFLYSCGC. The Cytoplasmic portion of the chain corresponds to 250-264; that stretch reads CVRKNNRVPWKRRFF.

This sequence belongs to the tetraspanin (TM4SF) family.

The protein localises to the membrane. Functionally, may be involved in the regulation of cell differentiation. This is Tetraspanin-12 (TET12) from Arabidopsis thaliana (Mouse-ear cress).